Consider the following 553-residue polypeptide: Putative transport protein YidE (553 aa).

5 helical membrane-spanning segments follow: residues 4-24, 28-48, 65-85, 95-115, and 158-178; these read IALTVSILALVAVVGLFIGNV, GVGLGIGGVLFGGIIVGHFVS, FGLILFVYTIGIQVGPGFFAS, LFAVLIVIIGGLVTAILHKLF, and MSYAMAYPFGICGILFTMWML. RCK C-terminal domains follow at residues 191 to 276 and 279 to 361; these read QQHE…VIGQ and DTSL…VLGN. 6 consecutive transmembrane segments (helical) span residues 371-391, 393-413, 439-459, 464-484, 493-513, and 533-553; these read MLPVFIGIGLGVLLGSIPVFV, GFPAALKLGLAGGPLIMALIL, IVLFLSVVGLKSGGDFIHTLV, LSWIGYGALITAVPLITVGIL, YLTMCGMLAGSMTDPPALAFA, and LVMFLRIITPQLLAVLFWSIG.

The protein belongs to the AAE transporter (TC 2.A.81) family. YidE subfamily.

Its subcellular location is the cell membrane. This is Putative transport protein YidE from Escherichia coli O6:K15:H31 (strain 536 / UPEC).